Here is a 208-residue protein sequence, read N- to C-terminus: 2-dehydro-3-deoxy-phosphogluconate aldolase (208 aa).

The Proton acceptor role is filled by glutamate 41. 3 residues coordinate pyruvate: arginine 45, threonine 68, and lysine 128. Catalysis depends on lysine 128, which acts as the Schiff-base intermediate with substrate.

The protein belongs to the KHG/KDPG aldolase family. As to quaternary structure, homotrimer.

The protein resides in the cytoplasm. It catalyses the reaction 2-dehydro-3-deoxy-6-phospho-D-gluconate = D-glyceraldehyde 3-phosphate + pyruvate. Its pathway is carbohydrate acid metabolism; 2-dehydro-3-deoxy-D-gluconate degradation; D-glyceraldehyde 3-phosphate and pyruvate from 2-dehydro-3-deoxy-D-gluconate: step 2/2. Involved in the degradation of glucose via the Entner-Doudoroff pathway. Catalyzes the reversible, stereospecific retro-aldol cleavage of 2-keto-3-deoxy-6-phosphogluconate (KDPG) to pyruvate and D-glyceraldehyde-3-phosphate. This is 2-dehydro-3-deoxy-phosphogluconate aldolase from Zymomonas mobilis subsp. mobilis (strain ATCC 31821 / ZM4 / CP4).